We begin with the raw amino-acid sequence, 1092 residues long: Isoleucine--tRNA ligase (1092 aa).

Positions 53–63 (PFANGLPHYGH) match the 'HIGH' region motif. Positions 613–617 (KLSKR) match the 'KMSKS' region motif. Lys-616 is an ATP binding site.

This sequence belongs to the class-I aminoacyl-tRNA synthetase family. IleS type 2 subfamily. Monomer. Zn(2+) is required as a cofactor.

The protein localises to the cytoplasm. The catalysed reaction is tRNA(Ile) + L-isoleucine + ATP = L-isoleucyl-tRNA(Ile) + AMP + diphosphate. Its function is as follows. Catalyzes the attachment of isoleucine to tRNA(Ile). As IleRS can inadvertently accommodate and process structurally similar amino acids such as valine, to avoid such errors it has two additional distinct tRNA(Ile)-dependent editing activities. One activity is designated as 'pretransfer' editing and involves the hydrolysis of activated Val-AMP. The other activity is designated 'posttransfer' editing and involves deacylation of mischarged Val-tRNA(Ile). This is Isoleucine--tRNA ligase from Rickettsia peacockii (strain Rustic).